The following is a 397-amino-acid chain: Argininosuccinate synthase (397 aa).

An ATP-binding site is contributed by 8-16 (AYSGGLDTS). L-citrulline contacts are provided by Tyr86 and Ser91. An ATP-binding site is contributed by Gly116. 3 residues coordinate L-aspartate: Thr118, Asn122, and Asp123. Asn122 is an L-citrulline binding site. Arg126, Ser175, Ser184, Glu260, and Tyr272 together coordinate L-citrulline.

Belongs to the argininosuccinate synthase family. Type 1 subfamily. As to quaternary structure, homotetramer.

It localises to the cytoplasm. The catalysed reaction is L-citrulline + L-aspartate + ATP = 2-(N(omega)-L-arginino)succinate + AMP + diphosphate + H(+). Its pathway is amino-acid biosynthesis; L-arginine biosynthesis; L-arginine from L-ornithine and carbamoyl phosphate: step 2/3. The polypeptide is Argininosuccinate synthase (Clostridium botulinum (strain ATCC 19397 / Type A)).